The chain runs to 140 residues: Nucleoside diphosphate kinase (140 aa).

Lysine 11, phenylalanine 59, arginine 87, threonine 93, arginine 104, and asparagine 114 together coordinate ATP. Histidine 117 (pros-phosphohistidine intermediate) is an active-site residue.

Belongs to the NDK family. In terms of assembly, homotetramer. The cofactor is Mg(2+).

The protein resides in the cytoplasm. It catalyses the reaction a 2'-deoxyribonucleoside 5'-diphosphate + ATP = a 2'-deoxyribonucleoside 5'-triphosphate + ADP. The catalysed reaction is a ribonucleoside 5'-diphosphate + ATP = a ribonucleoside 5'-triphosphate + ADP. Functionally, major role in the synthesis of nucleoside triphosphates other than ATP. The ATP gamma phosphate is transferred to the NDP beta phosphate via a ping-pong mechanism, using a phosphorylated active-site intermediate. This is Nucleoside diphosphate kinase from Methylobacterium sp. (strain 4-46).